A 554-amino-acid chain; its full sequence is MTELEKIGLIPRSIVRMLDRFYYQIYLGTAEPLVKQFRFSKYLLLTSVKSLFVVLFIPFFINIFTKIYVFRPLVEYFWDRKQTEIFLNYELQEKAFSEIRNFEEKMYFDYLIKTENFFPEKPKYFLPEAPLPGELPMQKKELFGVNLQEYKFKSNHSCLKFYSTEANSSVFGFENGNSLKLSHVSLFASKYPIKFTVIKNDLFKIKNQEGKSGAFPASEEEKKLKKGEKALLFPLLPTFSFSPRKNSSFFLGEKENMGISPGSKEEKKLKFFFFPHSGGTFSHCSLGIEDSEGKFSPGRREISPLLPGEHCGKLGKNAIFLLEEEKNGSGETRASFATSGSKAPALEELKNQSIDFLIPLEKSSPQRTFFSQHLASDFCSFDLTAQTKFHFVSFPNSIDTVPYNFNKNTESIFRQKTRELANHYNNESISAITNLLADFMGLFILLFLLVNMKMSLMNTTAFLSESFFSLKDSKKAFLMLLFTDLLVGFHSPRGWEVIFHFLFEHFGLPENHNIIFLLVGTFPVLLDALFKYWIFRHLNRHSPATVATFQAMVE.

The chain crosses the membrane as a helical span at residues 50-70 (SLFVVLFIPFFINIFTKIYVF). An insert region spans residues 113–410 (KTENFFPEKP…VPYNFNKNTE (298 aa)). The next 3 helical transmembrane spans lie at 429-449 (ISAI…LFLL), 479-499 (MLLF…EVIF), and 514-534 (IIFL…KYWI).

The protein belongs to the CemA family.

Its subcellular location is the plastid. It localises to the chloroplast inner membrane. The catalysed reaction is K(+)(in) + H(+)(out) = K(+)(out) + H(+)(in). Functionally, contributes to K(+)/H(+) antiport activity by supporting proton efflux to control proton extrusion and homeostasis in chloroplasts in a light-dependent manner to modulate photosynthesis. Prevents excessive induction of non-photochemical quenching (NPQ) under continuous-light conditions. Indirectly promotes efficient inorganic carbon uptake into chloroplasts. This Stigeoclonium helveticum (Green alga) protein is Potassium/proton antiporter CemA.